A 196-amino-acid polypeptide reads, in one-letter code: MSHALDAAALDQLFRTARTQNGFLDKPVPASLLQELYDLVKWGPTAANTTPARFVFVTSKEAKAKLAPALSEGNHDKTMAAPVTVIIGFDLDFHEKLPYLFPHTDAKAWFDGPQEGRHEAAIRNGSLQGAYLILAARALGLDAGPMSGFDAAKVDEAFFAGTSIKSNFLVNLGYGDSAGLFPRLPRLSFDEAARIA.

This sequence belongs to the nitroreductase family. HadB/RutE subfamily. It depends on FMN as a cofactor.

The protein is Putative NADH dehydrogenase/NAD(P)H nitroreductase Smal_0358 of Stenotrophomonas maltophilia (strain R551-3).